Consider the following 119-residue polypeptide: Large ribosomal subunit protein bL20 (119 aa).

The protein belongs to the bacterial ribosomal protein bL20 family.

In terms of biological role, binds directly to 23S ribosomal RNA and is necessary for the in vitro assembly process of the 50S ribosomal subunit. It is not involved in the protein synthesizing functions of that subunit. The sequence is that of Large ribosomal subunit protein bL20 from Streptococcus mutans serotype c (strain ATCC 700610 / UA159).